The sequence spans 194 residues: Large ribosomal subunit protein eL15 (194 aa).

Residues 162 to 173 (KTSAGRRARGLH) are compositionally biased toward basic residues. Residues 162–194 (KTSAGRRARGLHNRGTGTEKCRPSLTSHKNQGK) form a disordered region. Positions 185–194 (SLTSHKNQGK) are enriched in polar residues.

It belongs to the eukaryotic ribosomal protein eL15 family.

The chain is Large ribosomal subunit protein eL15 from Methanocorpusculum labreanum (strain ATCC 43576 / DSM 4855 / Z).